A 197-amino-acid polypeptide reads, in one-letter code: Ion-translocating oxidoreductase complex subunit B (197 aa).

Positions 1–26 (MSTILIAIIALAALAAVFGAILGFAS) are hydrophobic. The 59-residue stretch at 32 to 90 (EADPIVDQIDSILPQTQCGQCGYPGCRPYAEAIANGDQINKCPPGGQATIEKLADLMGV) folds into the 4Fe-4S domain. Cys-49, Cys-52, Cys-57, Cys-73, Cys-114, Cys-117, Cys-120, Cys-124, Cys-144, Cys-147, Cys-150, and Cys-154 together coordinate [4Fe-4S] cluster. 2 4Fe-4S ferredoxin-type domains span residues 105 to 134 (TVAFIHEDMCIGCTKCIQACPVDAIVGGTK) and 135 to 164 (ALHTVIKDECTGCDLCVAPCPTDCIEMIPV).

It belongs to the 4Fe4S bacterial-type ferredoxin family. RnfB subfamily. In terms of assembly, the complex is composed of six subunits: RnfA, RnfB, RnfC, RnfD, RnfE and RnfG. The cofactor is [4Fe-4S] cluster.

The protein resides in the cell inner membrane. Functionally, part of a membrane-bound complex that couples electron transfer with translocation of ions across the membrane. This chain is Ion-translocating oxidoreductase complex subunit B, found in Vibrio campbellii (strain ATCC BAA-1116).